We begin with the raw amino-acid sequence, 529 residues long: uncharacterized protein (529 aa).

2 ABC transporter domains span residues 6–257 (LAIE…QKLL) and 287–526 (IRKG…RQLL). Residues 42–49 (GESGSGKS) and 319–326 (GESGSGKS) contribute to the ATP site.

The protein belongs to the ABC transporter superfamily.

This is an uncharacterized protein from Escherichia coli (strain K12).